The chain runs to 381 residues: Acetylornithine deacetylase (381 aa).

His-79 contacts Zn(2+). Asp-81 is a catalytic residue. Zn(2+) is bound at residue Asp-111. Glu-143 is a catalytic residue. Residues Glu-144, Glu-168, and His-354 each coordinate Zn(2+).

Belongs to the peptidase M20A family. ArgE subfamily. Homodimer. Zn(2+) serves as cofactor. It depends on Co(2+) as a cofactor. Requires glutathione as cofactor.

It localises to the cytoplasm. The enzyme catalyses N(2)-acetyl-L-ornithine + H2O = L-ornithine + acetate. The protein operates within amino-acid biosynthesis; L-arginine biosynthesis; L-ornithine from N(2)-acetyl-L-ornithine (linear): step 1/1. In terms of biological role, catalyzes the hydrolysis of the amide bond of N(2)-acetylated L-amino acids. Cleaves the acetyl group from N-acetyl-L-ornithine to form L-ornithine, an intermediate in L-arginine biosynthesis pathway, and a branchpoint in the synthesis of polyamines. This is Acetylornithine deacetylase from Buchnera aphidicola subsp. Acyrthosiphon pisum (strain APS) (Acyrthosiphon pisum symbiotic bacterium).